Reading from the N-terminus, the 146-residue chain is Ankyrin repeat-containing protein P16F5.05c (146 aa).

4 ANK repeats span residues 1 to 31 (MDVD…ELSR), 35 to 64 (NGNS…KEVI), 70 to 99 (SGNT…DPHI), and 103 to 132 (YEKS…AKGS).

Its subcellular location is the cytoplasm. It is found in the nucleus. In Schizosaccharomyces pombe (strain 972 / ATCC 24843) (Fission yeast), this protein is Ankyrin repeat-containing protein P16F5.05c.